The primary structure comprises 389 residues: uncharacterized protein (389 aa).

The next 4 membrane-spanning stretches (helical) occupy residues 31–51, 96–116, 123–143, and 152–172; these read LFIV…VEVI, IMQI…ALLV, APLV…MFPP, and MIDA…LPSS.

The protein to M.tuberculosis Rv2571c.

It is found in the cell membrane. This is an uncharacterized protein from Corynebacterium glutamicum (strain ATCC 13032 / DSM 20300 / JCM 1318 / BCRC 11384 / CCUG 27702 / LMG 3730 / NBRC 12168 / NCIMB 10025 / NRRL B-2784 / 534).